Here is a 328-residue protein sequence, read N- to C-terminus: tRNA-modifying protein YgfZ (328 aa).

Folate is bound by residues tryptophan 28 and tryptophan 190.

Belongs to the tRNA-modifying YgfZ family.

It is found in the cytoplasm. In terms of biological role, folate-binding protein involved in regulating the level of ATP-DnaA and in the modification of some tRNAs. It is probably a key factor in regulatory networks that act via tRNA modification, such as initiation of chromosomal replication. The sequence is that of tRNA-modifying protein YgfZ from Sodalis glossinidius (strain morsitans).